The chain runs to 385 residues: Chaperone protein DnaJ (385 aa).

Residues aspartate 5–glycine 70 enclose the J domain. The CR-type zinc-finger motif lies at glycine 137–threonine 214. Residues cysteine 150, cysteine 153, cysteine 167, cysteine 170, cysteine 189, cysteine 192, cysteine 202, and cysteine 205 each contribute to the Zn(2+) site. CXXCXGXG motif repeat units follow at residues cysteine 150 to glycine 157, cysteine 167 to glycine 174, cysteine 189 to glycine 196, and cysteine 202 to glycine 209.

The protein belongs to the DnaJ family. Homodimer. Zn(2+) serves as cofactor.

The protein localises to the cytoplasm. Its function is as follows. Participates actively in the response to hyperosmotic and heat shock by preventing the aggregation of stress-denatured proteins and by disaggregating proteins, also in an autonomous, DnaK-independent fashion. Unfolded proteins bind initially to DnaJ; upon interaction with the DnaJ-bound protein, DnaK hydrolyzes its bound ATP, resulting in the formation of a stable complex. GrpE releases ADP from DnaK; ATP binding to DnaK triggers the release of the substrate protein, thus completing the reaction cycle. Several rounds of ATP-dependent interactions between DnaJ, DnaK and GrpE are required for fully efficient folding. Also involved, together with DnaK and GrpE, in the DNA replication of plasmids through activation of initiation proteins. The protein is Chaperone protein DnaJ of Vibrio harveyi (Beneckea harveyi).